Reading from the N-terminus, the 581-residue chain is Ezrin (581 aa).

Residues 2–295 form the FERM domain; that stretch reads PKPINVRVTT…GNHELYMRRR (294 aa). Lysine 60 carries the post-translational modification N6-acetyllysine. A [IL]-x-C-x-x-[DE] motif motif is present at residues 115 to 120; that stretch reads IYCPPE. Tyrosine 146 carries the phosphotyrosine; by PDGFR modification. An interaction with SCYL3 region spans residues 244-581; it reads EIRNISFNDK…KQRIDEFEAM (338 aa). The stretch at 302–462 forms a coiled coil; it reads VQQMKAQARE…QDDLVKTREE (161 aa). Residues 306 to 341 form a disordered region; the sequence is KAQAREEKHQKQLERQQLETEKKRRETVEREKEQMM. Residues 308–341 show a composition bias toward basic and acidic residues; that stretch reads QAREEKHQKQLERQQLETEKKRRETVEREKEQMM. Phosphotyrosine; by PDGFR is present on tyrosine 354. The residue at position 366 (serine 366) is a Phosphoserine. Phosphotyrosine is present on tyrosine 476. The disordered stretch occupies residues 534-560; the sequence is SQARDENKRTHNDIIHNENMRQGRDKY. Over residues 535–560 the composition is skewed to basic and acidic residues; that stretch reads QARDENKRTHNDIIHNENMRQGRDKY. At threonine 562 the chain carries Phosphothreonine; by ROCK2 and PKC/PRKCI.

As to quaternary structure, interacts with PALS1 and NHERF2. Found in a complex with EZR, PODXL and NHERF2. Interacts with MCC, PLEKHG6, PODXL, SCYL3/PACE1, NHERF1 and TMEM8B. Interacts (when phosphorylated) with FES/FPS. Interacts with dimeric S100P, the interaction may be activating through unmasking of F-actin binding sites. Identified in complexes that contain VIM, EZR, AHNAK, BFSP1, BFSP2, ANK2, PLEC, PRX and spectrin. Detected in a complex composed of at least EZR, AHNAK, PPL and PRX. Interacts with PDPN (via cytoplasmic domain); activates RHOA and promotes epithelial-mesenchymal transition. Interacts with SPN/CD43 cytoplasmic tail, CD44 and ICAM2. Interacts with SLC9A3; interaction targets SLC9A3 to the apical membrane. Interacts with SLC9A1; regulates interactions of SLC9A1 with cytoskeletal and promotes stress fiber formation. Interacts with CLIC5; may work together in a complex which also includes RDX and MYO6 to stabilize linkages between the plasma membrane and subjacent actin cytoskeleton at the base of stereocilia. Post-translationally, phosphorylated by tyrosine-protein kinases. Phosphorylation by ROCK2 suppresses the head-to-tail association of the N-terminal and C-terminal halves resulting in an opened conformation which is capable of actin and membrane-binding. In terms of processing, S-nitrosylation is induced by interferon-gamma and oxidatively-modified low-densitity lipoprotein (LDL(ox)) possibly implicating the iNOS-S100A8/9 transnitrosylase complex. As to expression, detected in eye lens fiber cells (at protein level).

It localises to the apical cell membrane. The protein localises to the cell projection. Its subcellular location is the microvillus membrane. It is found in the ruffle membrane. The protein resides in the cytoplasm. It localises to the cell cortex. The protein localises to the cytoskeleton. Its subcellular location is the microvillus. Its activity is regulated as follows. A head-to-tail association, of the N-terminal and C-terminal halves results in a closed conformation (inactive form) which is incapable of actin or membrane-binding. Probably involved in connections of major cytoskeletal structures to the plasma membrane. In epithelial cells, required for the formation of microvilli and membrane ruffles on the apical pole. Along with PLEKHG6, required for normal macropinocytosis. This Bos taurus (Bovine) protein is Ezrin (EZR).